Reading from the N-terminus, the 276-residue chain is Large ribosomal subunit protein uL2 (276 aa).

Disordered stretches follow at residues 36 to 55 (PLPRKAGRNNQGKLTVRHRG) and 219 to 276 (TVRG…GRKK). Residues 255–276 (LGKKTRKKKNRSNKLIVRGRKK) show a composition bias toward basic residues.

Belongs to the universal ribosomal protein uL2 family. As to quaternary structure, part of the 50S ribosomal subunit. Forms a bridge to the 30S subunit in the 70S ribosome.

Its function is as follows. One of the primary rRNA binding proteins. Required for association of the 30S and 50S subunits to form the 70S ribosome, for tRNA binding and peptide bond formation. It has been suggested to have peptidyltransferase activity; this is somewhat controversial. Makes several contacts with the 16S rRNA in the 70S ribosome. The sequence is that of Large ribosomal subunit protein uL2 from Macrococcus caseolyticus (strain JCSC5402) (Macrococcoides caseolyticum).